The following is a 254-amino-acid chain: PSME3-interacting protein (254 aa).

An N-acetylmethionine modification is found at Met1. Ser17 bears the Phosphoserine mark. The segment covering 22 to 39 has biased composition (basic and acidic residues); the sequence is DERRKRRQEEWEKVRKPE. The interval 22–52 is disordered; the sequence is DERRKRRQEEWEKVRKPEDPEECPEEVYDPR. At Lys139 the chain carries N6-acetyllysine. Residues 155-195 are disordered; that stretch reads GAVKHKSSESGNSVKRLKPDPEPDDKNQEPSSCKSLGNTSL. Positions 171–182 are enriched in basic and acidic residues; that stretch reads LKPDPEPDDKNQ. Residues 183 to 195 are compositionally biased toward polar residues; the sequence is EPSSCKSLGNTSL. Residues 201–254 are interaction with PSME3; the sequence is HCPSAAVCIGILPGLGAYSGSSDSESSSDSEGTINATGKIVSSIFRTNTFLEAP. A phosphoserine; by CK2 mark is found at Ser222 and Ser228.

As to quaternary structure, interacts (via C-terminus) with both free and 20S proteasome-bound forms of the proteasome activator complex subunit PSME3; the interaction is direct. Phosphorylation by CK2 stabilizes the interaction with PSME3.

It localises to the nucleus. Functionally, promotes the association of the proteasome activator complex subunit PSME3 with the 20S proteasome and regulates its activity. Inhibits PSME3-mediated degradation of some proteasome substrates, probably by affecting their diffusion rate into the catalytic chamber of the proteasome. Also inhibits the interaction of PSME3 with COIL, inhibits accumulation of PSME3 in Cajal bodies and positively regulates the number of Cajal bodies in the nucleus. This chain is PSME3-interacting protein, found in Homo sapiens (Human).